Here is a 630-residue protein sequence, read N- to C-terminus: Biosynthetic arginine decarboxylase (630 aa).

K99 carries the post-translational modification N6-(pyridoxal phosphate)lysine. Residue V281 to Y291 participates in substrate binding.

Belongs to the Orn/Lys/Arg decarboxylase class-II family. SpeA subfamily. The cofactor is Mg(2+). Requires pyridoxal 5'-phosphate as cofactor.

The catalysed reaction is L-arginine + H(+) = agmatine + CO2. Its function is as follows. Catalyzes the biosynthesis of agmatine from arginine. The chain is Biosynthetic arginine decarboxylase from Bacteroides thetaiotaomicron (strain ATCC 29148 / DSM 2079 / JCM 5827 / CCUG 10774 / NCTC 10582 / VPI-5482 / E50).